Reading from the N-terminus, the 388-residue chain is Processive diacylglycerol beta-glucosyltransferase (388 aa).

The protein belongs to the glycosyltransferase 28 family. UgtP subfamily.

It is found in the cell membrane. It carries out the reaction a 1,2-diacyl-3-O-(beta-D-glucopyranosyl)-sn-glycerol + UDP-alpha-D-glucose = a 1,2-diacyl-3-O-(beta-D-Glc-(1-&gt;6)-beta-D-Glc)-sn-glycerol + UDP + H(+). It catalyses the reaction a 1,2-diacyl-3-O-(beta-D-Glc-(1-&gt;6)-beta-D-Glc)-sn-glycerol + UDP-alpha-D-glucose = a 1,2-diacyl-3-O-(beta-D-Glc-(1-&gt;6)-beta-D-Glc-(1-&gt;6)-beta-D-Glc)-sn-glycerol + UDP + H(+). The enzyme catalyses a 1,2-diacyl-sn-glycerol + UDP-alpha-D-glucose = a 1,2-diacyl-3-O-(beta-D-glucopyranosyl)-sn-glycerol + UDP + H(+). The protein operates within glycolipid metabolism; diglucosyl-diacylglycerol biosynthesis. In terms of biological role, processive glucosyltransferase involved in the biosynthesis of both the bilayer- and non-bilayer-forming membrane glucolipids. Is able to successively transfer up to three glucosyl residues to diacylglycerol (DAG), thereby catalyzing the formation of beta-monoglucosyl-DAG (3-O-(beta-D-glucopyranosyl)-1,2-diacyl-sn-glycerol), beta-diglucosyl-DAG (3-O-(beta-D-glucopyranosyl-beta-(1-&gt;6)-D-glucopyranosyl)-1,2-diacyl-sn-glycerol) and beta-triglucosyl-DAG (3-O-(beta-D-glucopyranosyl-beta-(1-&gt;6)-D-glucopyranosyl-beta-(1-&gt;6)-D-glucopyranosyl)-1,2-diacyl-sn-glycerol). Beta-diglucosyl-DAG is the predominant glycolipid found in Bacillales and is also used as a membrane anchor for lipoteichoic acid (LTA). The protein is Processive diacylglycerol beta-glucosyltransferase of Bacillus cereus (strain AH187).